The primary structure comprises 1481 residues: DNA-directed RNA polymerase subunit beta'' (1481 aa).

Zn(2+) contacts are provided by Cys217, Cys291, Cys298, and Cys301.

This sequence belongs to the RNA polymerase beta' chain family. RpoC2 subfamily. As to quaternary structure, in plastids the minimal PEP RNA polymerase catalytic core is composed of four subunits: alpha, beta, beta', and beta''. When a (nuclear-encoded) sigma factor is associated with the core the holoenzyme is formed, which can initiate transcription. It depends on Zn(2+) as a cofactor.

Its subcellular location is the plastid. It is found in the chloroplast. It catalyses the reaction RNA(n) + a ribonucleoside 5'-triphosphate = RNA(n+1) + diphosphate. Functionally, DNA-dependent RNA polymerase catalyzes the transcription of DNA into RNA using the four ribonucleoside triphosphates as substrates. The polypeptide is DNA-directed RNA polymerase subunit beta'' (Trieres chinensis (Marine centric diatom)).